We begin with the raw amino-acid sequence, 256 residues long: Protein FixA (256 aa).

It belongs to the ETF beta-subunit/FixA family. Heterodimer of FixA and FixB.

It participates in amine and polyamine metabolism; carnitine metabolism. Functionally, required for anaerobic carnitine reduction. May bring reductant to CaiA. The protein is Protein FixA of Escherichia coli O81 (strain ED1a).